The chain runs to 122 residues: Large ribosomal subunit protein uL14 (122 aa).

The protein belongs to the universal ribosomal protein uL14 family. Part of the 50S ribosomal subunit. Forms a cluster with proteins L3 and L19. In the 70S ribosome, L14 and L19 interact and together make contacts with the 16S rRNA in bridges B5 and B8.

Its function is as follows. Binds to 23S rRNA. Forms part of two intersubunit bridges in the 70S ribosome. This chain is Large ribosomal subunit protein uL14, found in Chlamydia abortus (strain DSM 27085 / S26/3) (Chlamydophila abortus).